The following is a 179-amino-acid chain: DELTA-actitoxin-Afr1c (179 aa).

Residues 1 to 29 (SAEVAGAIIDGASLTFDVLQTVLKALGDV) form an N-terminal alpha-helix that contributes to the pore region. Positions 11-30 (GASLTFDVLQTVLKALGDVS) are N-terminal region. Arg-31 is an an N-(acyl)-sphingosylphosphocholine binding site. N-acetyl-D-glucosamine 6-sulfate contacts are provided by Tyr-51 and Arg-53. An N-(acyl)-sphingosylphosphocholine is bound by residues Arg-53, Ser-54, Arg-79, Gly-85, Tyr-113, Ser-114, Trp-116, Tyr-133, Tyr-137, Tyr-138, Arg-144, and Gly-168. The tract at residues 105–120 (SIPFDYNLYSNWWNVK) is trp-rich region, which is important for the binding to lipid membrane. Tyr-138 provides a ligand contact to N-acetyl-D-glucosamine 6-sulfate. The Cell attachment site, crucial for protein stability signature appears at 144–146 (RGD).

It belongs to the actinoporin family. Sea anemone subfamily. As to quaternary structure, octamer or nonamer in membranes. Monomer in the soluble state.

It is found in the secreted. The protein resides in the nematocyst. The protein localises to the target cell membrane. Functionally, pore-forming toxin (PFT) that consists of a crown-shaped octamer or nonamer that forms cation-selective hydrophilic pores of about 1.5 nm (inside) and 13 nm (outside) and causes cytolysis. It causes cardiac stimulation. Also causes hemolysis (HC(50)=0.3 nM). Interestingly, the Phe-16 is crucial for hemolysis. Pore formation is a multi-step process that involves specific recognition of membrane sphingomyelin (but neither cholesterol nor phosphatidylcholine) using aromatic rich region and adjacent phosphocholine (POC) binding site, firm binding to the membrane (mainly driven by hydrophobic interactions) accompanied by the transfer of the N-terminal region to the lipid-water interface and finally pore formation after oligomerization of monomers. It is probable that a dimeric form is an assembly intermediate before the complete oligomerization. The formation of stable pores occurs only in vesicles composed of DOPC/SM (there is no oligomerization when the PFT is treated with vesicles of DOPC or SM alone). The transmembrane pore displays 8 lateral perforations, one at each subunit-subunit interface, partially occupied by the acyl-chain region of a bridging lipid. Each pore contains 24 lipid molecules, firmly bound to each subunit, that is, 3 lipids (L1, L2, L3, L4 and/or L5) are associated to each subunit. Lipid L1 bridges 2 subunits, whereas lipids L2 and L3 bind to sites at single subunit. The sequence is that of DELTA-actitoxin-Afr1c from Actinia fragacea (Strawberry anemone).